The chain runs to 161 residues: HMG1/2-like protein (161 aa).

Disordered regions lie at residues 1–46 (MKGA…KRAP), 60–91 (FKQK…EKAP), and 113–161 (GESA…DDDE). Composition is skewed to basic and acidic residues over residues 10-27 (AKAD…EKPA) and 77-89 (AGER…ESEK). The HMG box DNA-binding region spans 42–111 (PKRAPSAFFV…EYNKAIAAYN (70 aa)). A compositionally biased stretch (low complexity) spans 114–123 (ESAAAAAPKK). Over residues 145–161 (NDDDDDEGSDEDEDDDE) the composition is skewed to acidic residues.

Belongs to the HMGB family.

It localises to the nucleus. This is HMG1/2-like protein from Triticum aestivum (Wheat).